Consider the following 307-residue polypeptide: Mitochondrial brown fat uncoupling protein 1 (307 aa).

At 2 to 10 (VNPTTSEVH) the chain is on the mitochondrial intermembrane side. A helical transmembrane segment spans residues 11-32 (PTMGVKIFSAGVAACLADIITF). Solcar repeat units follow at residues 11–102 (PTMG…VQEY), 111–201 (PTLG…MKGA), and 210–295 (DDVP…LKKE). The Mitochondrial matrix portion of the chain corresponds to 33 to 73 (PLDTAKVRLQIQGEGQISSTIRYKGVLGTITTLAKTEGLPK). Lys56 is a binding site for fatty acid 16:0. The helical transmembrane segment at 74–96 (LYSGLPAGIQRQISFASLRIGLY) threads the bilayer. The Mitochondrial intermembrane portion of the chain corresponds to 97–116 (DTVQEYFSSGKETPPTLGNR). A helical transmembrane segment spans residues 117-133 (ISAGLMTGGVAVFIGQP). The Mitochondrial matrix segment spans residues 134–178 (TEVVKVRLQAQSHLHGIKPRYTGTYNAYRIIATTESFSTLWKGTT). The chain crosses the membrane as a helical span at residues 179 to 195 (PNLLRNVIINCVELVTY). Over 196–212 (DLMKGALVNNQILADDV) the chain is Mitochondrial intermembrane. The helical transmembrane segment at 213-232 (PCHLLSAFVAGFCTTFLASP) threads the bilayer. The Mitochondrial matrix segment spans residues 233 to 266 (ADVVKTRFINSLPGQYPSVPSCAMTMLTKEGPTA). Cys254 is subject to Cysteine sulfenic acid (-SOH). A helical transmembrane segment spans residues 267 to 289 (FFKGFVPSFLRLASWNVIMFVCF). Position 269 (Lys269) interacts with fatty acid 16:0. Over 290–307 (EQLKKELSKSRQTVDCTT) the chain is Mitochondrial intermembrane.

This sequence belongs to the mitochondrial carrier (TC 2.A.29) family. In terms of assembly, most probably functions as a monomer. Binds one purine nucleotide per monomer. However, has also been suggested to function as a homodimer or a homotetramer. Tightly associates with cardiolipin in the mitochondrion inner membrane; may stabilize and regulate its activity. Post-translationally, may undergo sulfenylation upon cold exposure. May increase the sensitivity of UCP1 thermogenic function to the activation by noradrenaline probably through structural effects. May undergo ubiquitin-mediated proteasomal degradation. Brown adipose tissue.

It is found in the mitochondrion inner membrane. The catalysed reaction is H(+)(in) = H(+)(out). With respect to regulation, has no constitutive proton transporter activity and has to be activated by long-chain fatty acids/LCFAs. Inhibited by purine nucleotides. Both purine nucleotides and LCFAs bind the cytosolic side of the transporter and directly compete to activate or inhibit it. Activated by noradrenaline and reactive oxygen species. Despite lacking canonical translational encoding for selenocysteine, a small pool of the protein has been observed to selectively incorporate selenocysteine at 'Cys-254'. Selenocysteine-modified protein is highly sensitive to redox modification and may constitute a pool of protein highly sensitive to activation by elevated levels of reactive oxygen species (ROS). Mitochondrial protein responsible for thermogenic respiration, a specialized capacity of brown adipose tissue and beige fat that participates in non-shivering adaptive thermogenesis to temperature and diet variations and more generally to the regulation of energy balance. Functions as a long-chain fatty acid/LCFA and proton symporter, simultaneously transporting one LCFA and one proton through the inner mitochondrial membrane. However, LCFAs remaining associated with the transporter via their hydrophobic tails, it results in an apparent transport of protons activated by LCFAs. Thereby, dissipates the mitochondrial proton gradient and converts the energy of substrate oxydation into heat instead of ATP. Regulates the production of reactive oxygen species/ROS by mitochondria. The sequence is that of Mitochondrial brown fat uncoupling protein 1 from Mesocricetus auratus (Golden hamster).